The chain runs to 239 residues: Tryptophan synthase alpha chain (239 aa).

Active-site proton acceptor residues include E34 and D45.

Belongs to the TrpA family. As to quaternary structure, tetramer of two alpha and two beta chains.

The enzyme catalyses (1S,2R)-1-C-(indol-3-yl)glycerol 3-phosphate + L-serine = D-glyceraldehyde 3-phosphate + L-tryptophan + H2O. It functions in the pathway amino-acid biosynthesis; L-tryptophan biosynthesis; L-tryptophan from chorismate: step 5/5. In terms of biological role, the alpha subunit is responsible for the aldol cleavage of indoleglycerol phosphate to indole and glyceraldehyde 3-phosphate. This chain is Tryptophan synthase alpha chain, found in Thermotoga petrophila (strain ATCC BAA-488 / DSM 13995 / JCM 10881 / RKU-1).